Reading from the N-terminus, the 270-residue chain is Sorting nexin-11 (270 aa).

The PX domain maps to 16 to 132 (VITVRVQDPR…HLFLQSQLSV (117 aa)). A 1,2-diacyl-sn-glycero-3-phospho-(1D-myo-inositol-3-phosphate) contacts are provided by arginine 59, lysine 85, and arginine 99. An important for membrane trafficking region spans residues 135–139 (IEACV). The segment covering 168–177 (SSSHLAKGDQ) has biased composition (basic and acidic residues). Residues 168–203 (SSSHLAKGDQPKSCCFLPRSGRRSSPSPPPSEEKDH) are disordered.

Belongs to the sorting nexin family. Monomer. Interacts with TRPV3; this interaction promotes TRPV3 trafficking from the cell membrane to lysosome for degradation.

Its subcellular location is the cell membrane. The protein localises to the endosome. The protein resides in the cytoplasm. Phosphoinositide-binding protein involved in protein sorting and membrane trafficking in endosomes. Regulates the levels of TRPV3 by promoting its trafficking from the cell membrane to lysosome for degradation. The chain is Sorting nexin-11 (SNX11) from Homo sapiens (Human).